The primary structure comprises 311 residues: Protoheme IX farnesyltransferase (311 aa).

Transmembrane regions (helical) follow at residues 32 to 52, 53 to 73, 104 to 124, 125 to 145, 153 to 173, 180 to 200, 224 to 244, 245 to 265, and 285 to 305; these read VMSL…VPIN, PWYG…AGAL, FIFG…FINW, FAAF…TIWL, IVIG…VTTG, FLLF…LSLF, KQIL…CFTG, LGGV…IYFA, and FFFS…ESLV.

The protein belongs to the UbiA prenyltransferase family. Protoheme IX farnesyltransferase subfamily.

It is found in the cell inner membrane. The catalysed reaction is heme b + (2E,6E)-farnesyl diphosphate + H2O = Fe(II)-heme o + diphosphate. It participates in porphyrin-containing compound metabolism; heme O biosynthesis; heme O from protoheme: step 1/1. Converts heme B (protoheme IX) to heme O by substitution of the vinyl group on carbon 2 of heme B porphyrin ring with a hydroxyethyl farnesyl side group. This Bartonella tribocorum (strain CIP 105476 / IBS 506) protein is Protoheme IX farnesyltransferase.